A 362-amino-acid chain; its full sequence is Putative F-box protein At3g23260 (362 aa).

Residues 1–46 (MEWRSLPVELQEEILSRVPAKYLARLRSTSKQWNALSKTGSFAKKH) enclose the F-box domain.

The sequence is that of Putative F-box protein At3g23260 from Arabidopsis thaliana (Mouse-ear cress).